The following is a 676-amino-acid chain: Rho guanine nucleotide exchange factor 37 (676 aa).

Positions 1 to 26 (MADFETDEASSKSESPEQEGQGSEDK) are disordered. The DH domain occupies 30–213 (HQRLAIRELI…QDVNSNINEY (184 aa)). The region spanning 254-455 (LKQEAGLVPR…LPHRHVSEPD (202 aa)) is the BAR domain. SH3 domains are found at residues 506–569 (GPGK…LYHP) and 603–666 (PTMS…RTPS). Disordered regions lie at residues 568-601 (HPIN…SVPT) and 657-676 (PSNF…NLPS).

Functionally, may act as a guanine nucleotide exchange factor (GEF). The chain is Rho guanine nucleotide exchange factor 37 (Arhgef37) from Rattus norvegicus (Rat).